We begin with the raw amino-acid sequence, 778 residues long: Endonuclease MutS2 (778 aa).

328–335 (GPNTGGKT) contributes to the ATP binding site. A Smr domain is found at 702-777 (LDLRGKRYEE…GSGATIVTFK (76 aa)).

It belongs to the DNA mismatch repair MutS family. MutS2 subfamily. Homodimer. Binds to stalled ribosomes, contacting rRNA.

In terms of biological role, endonuclease that is involved in the suppression of homologous recombination and thus may have a key role in the control of bacterial genetic diversity. Its function is as follows. Acts as a ribosome collision sensor, splitting the ribosome into its 2 subunits. Detects stalled/collided 70S ribosomes which it binds and splits by an ATP-hydrolysis driven conformational change. Acts upstream of the ribosome quality control system (RQC), a ribosome-associated complex that mediates the extraction of incompletely synthesized nascent chains from stalled ribosomes and their subsequent degradation. Probably generates substrates for RQC. This Streptococcus pneumoniae (strain 70585) protein is Endonuclease MutS2.